The sequence spans 710 residues: Integrator complex subunit 10 (710 aa).

Ser231, Ser381, and Ser382 each carry phosphoserine. Lys464 is covalently cross-linked (Glycyl lysine isopeptide (Lys-Gly) (interchain with G-Cter in SUMO2)).

Belongs to the Integrator subunit 10 family. In terms of assembly, component of the Integrator complex, composed of core subunits INTS1, INTS2, INTS3, INTS4, INTS5, INTS6, INTS7, INTS8, INTS9/RC74, INTS10, INTS11/CPSF3L, INTS12, INTS13, INTS14 and INTS15. The core complex associates with protein phosphatase 2A subunits PPP2CA and PPP2R1A, to form the Integrator-PP2A (INTAC) complex. INTS10 is part of the tail subcomplex, composed of INTS10, INTS13, INTS14 and INTS15.

The protein localises to the nucleus. Its function is as follows. Component of the integrator complex, a multiprotein complex that terminates RNA polymerase II (Pol II) transcription in the promoter-proximal region of genes. The integrator complex provides a quality checkpoint during transcription elongation by driving premature transcription termination of transcripts that are unfavorably configured for transcriptional elongation: the complex terminates transcription by (1) catalyzing dephosphorylation of the C-terminal domain (CTD) of Pol II subunit POLR2A/RPB1 and SUPT5H/SPT5, (2) degrading the exiting nascent RNA transcript via endonuclease activity and (3) promoting the release of Pol II from bound DNA. The integrator complex is also involved in terminating the synthesis of non-coding Pol II transcripts, such as enhancer RNAs (eRNAs), small nuclear RNAs (snRNAs), telomerase RNAs and long non-coding RNAs (lncRNAs). Within the integrator complex, INTS10 is part of the integrator tail module that acts as a platform for the recruitment of transcription factors at promoters. May be not involved in the recruitment of cytoplasmic dynein to the nuclear envelope, probably as component of the integrator complex. This chain is Integrator complex subunit 10 (Ints10), found in Mus musculus (Mouse).